The following is a 396-amino-acid chain: Orotidine 5'-phosphate decarboxylase (396 aa).

Residues Asp46, 68–70, 103–112, Tyr346, and Arg365 contribute to the substrate site; these read KTH and DRKFVDIGST. Lys105 (proton donor) is an active-site residue.

It belongs to the OMP decarboxylase family.

The enzyme catalyses orotidine 5'-phosphate + H(+) = UMP + CO2. The protein operates within pyrimidine metabolism; UMP biosynthesis via de novo pathway; UMP from orotate: step 2/2. The sequence is that of Orotidine 5'-phosphate decarboxylase (URA3) from Sordaria macrospora (strain ATCC MYA-333 / DSM 997 / K(L3346) / K-hell).